A 153-amino-acid polypeptide reads, in one-letter code: MLNQLQSLTEYVGGNNALIDQWLQARKQLLVAYYHLVGIKPNKEALSLLDEEALDNFCQNLVDYLSTGHFHLYEKMLHEAATHSEQVLALSTQLDFALQNNTQQIMTFYDSHLAAAIDHDNCIEFQQALSSVGEALEERFTLEDNMIKQVYDN.

Belongs to the Rsd/AlgQ family. In terms of assembly, interacts with RpoD.

The protein resides in the cytoplasm. Binds RpoD and negatively regulates RpoD-mediated transcription activation by preventing the interaction between the primary sigma factor RpoD with the catalytic core of the RNA polymerase and with promoter DNA. May be involved in replacement of the RNA polymerase sigma subunit from RpoD to RpoS during the transition from exponential growth to the stationary phase. The chain is Regulator of sigma D from Pectobacterium atrosepticum (strain SCRI 1043 / ATCC BAA-672) (Erwinia carotovora subsp. atroseptica).